The primary structure comprises 426 residues: Mediator of RNA polymerase II transcription subunit 1 (426 aa).

The disordered stretch occupies residues 319-349 (ISTSNSGSVQPKPRRKSSVLSNRRPSMTDSM). The segment covering 336–347 (SVLSNRRPSMTD) has biased composition (polar residues).

The protein belongs to the Mediator complex subunit 1 family. As to quaternary structure, component of the Mediator complex.

It is found in the nucleus. Component of the Mediator complex, a coactivator involved in the regulated transcription of nearly all RNA polymerase II-dependent genes. Mediator functions as a bridge to convey information from gene-specific regulatory proteins to the basal RNA polymerase II transcription machinery. Mediator is recruited to promoters by direct interactions with regulatory proteins and serves as a scaffold for the assembly of a functional preinitiation complex with RNA polymerase II and the general transcription factors. The chain is Mediator of RNA polymerase II transcription subunit 1 (MED1) from Kluyveromyces lactis (strain ATCC 8585 / CBS 2359 / DSM 70799 / NBRC 1267 / NRRL Y-1140 / WM37) (Yeast).